A 490-amino-acid polypeptide reads, in one-letter code: Tryptophan 5-hydroxylase 2 (490 aa).

Position 19 is a phosphoserine (Ser-19). Over residues 31-42 the composition is skewed to polar residues; it reads LGSSTLNKPNSG. Residues 31-58 are disordered; sequence LGSSTLNKPNSGKNDDKGNKGSSKREAA. Residues 43–58 are compositionally biased toward basic and acidic residues; the sequence is KNDDKGNKGSSKREAA. The 76-residue stretch at 65–140 folds into the ACT domain; the sequence is AVVFSLKNEV…TIVTLNPPEN (76 aa). Positions 318, 323, and 363 each coordinate Fe cation.

This sequence belongs to the biopterin-dependent aromatic amino acid hydroxylase family. Interacts with DNAJC12. Fe(2+) serves as cofactor. As to expression, brain specific.

The catalysed reaction is (6R)-L-erythro-5,6,7,8-tetrahydrobiopterin + L-tryptophan + O2 = 5-hydroxy-L-tryptophan + (4aS,6R)-4a-hydroxy-L-erythro-5,6,7,8-tetrahydrobiopterin. The protein operates within aromatic compound metabolism; serotonin biosynthesis; serotonin from L-tryptophan: step 1/2. This Homo sapiens (Human) protein is Tryptophan 5-hydroxylase 2 (TPH2).